A 512-amino-acid polypeptide reads, in one-letter code: L-aspartate oxidase (512 aa).

Residues Ser-17–Ala-20 and Ser-46–Gly-53 each bind FAD. The active-site Proton donor/acceptor is the Arg-278. FAD-binding positions include Glu-361 and Ser-377 to Leu-378.

The protein belongs to the FAD-dependent oxidoreductase 2 family. NadB subfamily. The cofactor is FAD.

Its subcellular location is the cytoplasm. The catalysed reaction is L-aspartate + O2 = iminosuccinate + H2O2. It functions in the pathway cofactor biosynthesis; NAD(+) biosynthesis; iminoaspartate from L-aspartate (oxidase route): step 1/1. Catalyzes the oxidation of L-aspartate to iminoaspartate, the first step in the de novo biosynthesis of NAD(+). In Xylella fastidiosa (strain 9a5c), this protein is L-aspartate oxidase (nadB).